We begin with the raw amino-acid sequence, 284 residues long: MAESEAETPGTPGEFESKYFEFHGVRLPPFCRGKMEDIADFPVRPSDVWIVTYPKSGTSLLQEVVYLVSQGADPDEIGLMNIDEQLPVLEYPQPGLDIIKELTSPRLIKSHLPYRFLPSDLHNGDSKVIYMARNPKDLVVSYYQFHRSLRTMSYRGTFQEFCRRFMNDKLGYGSWFEHVQEFWEHRMDANVLFLKYEDMHRDLVTMVEQLARFLGVSCDKAQLESLIEHCHQLVDQCCNAEALPVGRGRVGLWKDIFTVSMNEKFDLVYKQKMGKCDLTFDFYL.

Thr-8, Thr-11, and Thr-205 each carry phosphothreonine.

Belongs to the sulfotransferase 1 family. In terms of tissue distribution, expressed in brain, cerebellum and hypothalamus. Not detected in pancreas, liver, lung, intestine, kidney, uterus, adrenal gland, thymus, spleen, epididymis, testicle, and heart.

The protein resides in the cytoplasm. Atypical sulfotransferase family member with very low affinity for 3'-phospho-5'-adenylyl sulfate (PAPS) and very low catalytic activity towards L-triiodothyronine, thyroxine, estrone, p-nitrophenol, 2-naphthylamine, and 2-beta-naphthol. May have a role in the metabolism of drugs and neurotransmitters in the CNS. The polypeptide is Sulfotransferase 4A1 (Sult4a1) (Mus musculus (Mouse)).